The sequence spans 380 residues: Protein kinase ORF15 (380 aa).

One can recognise a Protein kinase domain in the interval 93–371; it reads FIPVKVAGCL…LLIAQLTKFI (279 aa). K118 lines the ATP pocket. D217 acts as the Proton acceptor in catalysis.

This sequence belongs to the protein kinase superfamily. Ser/Thr protein kinase family.

The catalysed reaction is L-seryl-[protein] + ATP = O-phospho-L-seryl-[protein] + ADP + H(+). It carries out the reaction L-threonyl-[protein] + ATP = O-phospho-L-threonyl-[protein] + ADP + H(+). This chain is Protein kinase ORF15 (ORF15), found in Ictalurid herpesvirus 1 (strain Auburn) (IcHV-1).